The primary structure comprises 374 residues: P2Y purinoceptor 11 (374 aa).

Residues methionine 1–aspartate 29 lie on the Extracellular side of the membrane. Asparagine 4 carries an N-linked (GlcNAc...) asparagine glycan. A helical membrane pass occupies residues phenylalanine 30–leucine 50. The Cytoplasmic portion of the chain corresponds to tyrosine 51 to alanine 64. A helical transmembrane segment spans residues valine 65 to leucine 85. Topologically, residues alanine 86–serine 116 are extracellular. Cysteines 102 and 180 form a disulfide. Residues valine 117–alanine 137 form a helical membrane-spanning segment. The Cytoplasmic segment spans residues arginine 138–alanine 146. The chain crosses the membrane as a helical span at residues tryptophan 147 to phenylalanine 167. At serine 168–serine 206 the chain is on the extracellular side. An N-linked (GlcNAc...) asparagine glycan is attached at asparagine 179. Residues leucine 207–alanine 227 form a helical membrane-spanning segment. At leucine 228–arginine 245 the chain is on the cytoplasmic side. Residues valine 246 to isoleucine 266 form a helical membrane-spanning segment. Topologically, residues methionine 267 to glycine 308 are extracellular. A helical transmembrane segment spans residues leucine 309–glycine 329. Residues cysteine 330–glutamine 374 lie on the Cytoplasmic side of the membrane. The segment at glutamate 345–glutamine 374 is disordered.

The protein belongs to the G-protein coupled receptor 1 family. In terms of tissue distribution, highest expression in liver and spleen.

The protein resides in the cell membrane. Functionally, receptor for ATP and ADP coupled to G-proteins that activate both phosphatidylinositol-calcium and adenylyl cyclase second messenger systems. Not activated by UTP or UDP. The chain is P2Y purinoceptor 11 (P2RY11) from Homo sapiens (Human).